We begin with the raw amino-acid sequence, 68 residues long: Protein transport protein Sec61 subunit gamma (68 aa).

Residues 1-32 (MDQIMQFVEPSRQFVKDSIRLVKRCTKPDRKE) are Cytoplasmic-facing. The helical transmembrane segment at 33 to 61 (FQKIAMATAIGFAIMGFIGFFVKLIHIPI) threads the bilayer. Topologically, residues 62–68 (NNIIVGG) are extracellular.

The protein belongs to the SecE/SEC61-gamma family. As to quaternary structure, the SEC61 channel-forming translocon complex consists of channel-forming core components SEC61A1, SEC61B and SEC61G and different auxiliary components such as SEC62 and SEC63. The SEC61 channel associates with the multi-pass translocon (MPT) complex.

It localises to the endoplasmic reticulum membrane. Its function is as follows. Component of SEC61 channel-forming translocon complex that mediates transport of signal peptide-containing precursor polypeptides across the endoplasmic reticulum (ER). Forms a ribosome receptor and a gated pore in the ER membrane, both functions required for cotranslational translocation of nascent polypeptides. The SEC61 channel is also involved in ER membrane insertion of transmembrane proteins: it mediates membrane insertion of the first few transmembrane segments of proteins, while insertion of subsequent transmembrane regions of multi-pass membrane proteins is mediated by the multi-pass translocon (MPT) complex. The polypeptide is Protein transport protein Sec61 subunit gamma (sec61g) (Gadus morhua (Atlantic cod)).